The chain runs to 138 residues: Small ribosomal subunit protein uS11c (138 aa).

Positions 1-22 (MTKPIPRIGSRRSGRIGSRKAG) are disordered. Over residues 9-22 (GSRRSGRIGSRKAG) the composition is skewed to basic residues.

Belongs to the universal ribosomal protein uS11 family. Part of the 30S ribosomal subunit.

Its subcellular location is the plastid. The protein resides in the chloroplast. The sequence is that of Small ribosomal subunit protein uS11c from Piper cenocladum (Ant piper).